The primary structure comprises 771 residues: DNA helicase/primase complex-associated protein (771 aa).

This sequence belongs to the herpesviridae HEPA family. As to quaternary structure, associates with the primase and the helicase to form the helicase-primase complex. Interacts with the origin-binding protein. Interacts with the polymerase catalytic subunit.

Its subcellular location is the host nucleus. Its function is as follows. Component of the helicase/primase complex. Unwinds the DNA at the replication forks and generates single-stranded DNA for both leading and lagging strand synthesis. The primase synthesizes short RNA primers on the lagging strand that the polymerase presumably elongates using dNTPs. The primase-associated factor has no known catalytic activity in the complex and may serve to facilitate the formation of the replisome by directly interacting with the origin-binding protein and the polymerase. This is DNA helicase/primase complex-associated protein from Varicella-zoster virus (strain Oka vaccine) (HHV-3).